The primary structure comprises 687 residues: Translation initiation factor IF-2 (687 aa).

Positions 186–355 constitute a tr-type G domain; sequence KRPPIVTVMG…LLTAEMLELK (170 aa). The G1 stretch occupies residues 195–202; it reads GHVDHGKT. 195–202 lines the GTP pocket; sequence GHVDHGKT. Residues 220 to 224 form a G2 region; the sequence is GITQH. The G3 stretch occupies residues 241-244; it reads DTPG. GTP is bound by residues 241–245 and 295–298; these read DTPGH and NKID. The G4 stretch occupies residues 295-298; that stretch reads NKID. The G5 stretch occupies residues 331 to 333; sequence SAK.

The protein belongs to the TRAFAC class translation factor GTPase superfamily. Classic translation factor GTPase family. IF-2 subfamily.

Its subcellular location is the cytoplasm. Functionally, one of the essential components for the initiation of protein synthesis. Protects formylmethionyl-tRNA from spontaneous hydrolysis and promotes its binding to the 30S ribosomal subunits. Also involved in the hydrolysis of GTP during the formation of the 70S ribosomal complex. This is Translation initiation factor IF-2 from Clostridium botulinum (strain Alaska E43 / Type E3).